Here is a 727-residue protein sequence, read N- to C-terminus: Engulfment and cell motility protein 1 (727 aa).

Y18 is subject to Phosphotyrosine; by HCK. N6-acetyllysine occurs at positions 100 and 105. Residue Y216 is modified to Phosphotyrosine; by HCK. Positions 319–492 (AQRDIIFELR…VVKEQVMRAL (174 aa)) constitute an ELMO domain. S344 carries the phosphoserine modification. Residues Y395 and Y511 each carry the phosphotyrosine; by HCK modification. Positions 555-676 (RLVEGTCFRK…DGLNALLGKD (122 aa)) constitute a PH domain. Residues 707–714 (PDAPPPIP) carry the SH3-binding motif. Y720 is modified (phosphotyrosine; by HCK).

In terms of assembly, interacts with ADGRB1. Interacts directly with the SH3-domain of DOCK1 via its SH3-binding site. Part of a complex with DOCK1 and RAC1. Part of a complex with DOCK1 and CRK isoform CRK-II. Interacts with PLEKHG6. Interacts with HCK (via SH3 domain). Interacts with ADGRB3. Interacts with DOCK5. Post-translationally, phosphorylated by HCK. In terms of tissue distribution, widely expressed, with a higher expression in the spleen and placenta.

Its subcellular location is the cytoplasm. The protein resides in the cell membrane. Functionally, involved in cytoskeletal rearrangements required for phagocytosis of apoptotic cells and cell motility. Acts in association with DOCK1 and CRK. Was initially proposed to be required in complex with DOCK1 to activate Rac Rho small GTPases. May enhance the guanine nucleotide exchange factor (GEF) activity of DOCK1. The sequence is that of Engulfment and cell motility protein 1 (ELMO1) from Homo sapiens (Human).